The chain runs to 154 residues: NADPH-dependent 7-cyano-7-deazaguanine reductase (154 aa).

Catalysis depends on cysteine 52, which acts as the Thioimide intermediate. Aspartate 59 functions as the Proton donor in the catalytic mechanism. Residues 74-76 and 93-94 contribute to the substrate site; these read VES and HE.

This sequence belongs to the GTP cyclohydrolase I family. QueF type 1 subfamily.

The protein localises to the cytoplasm. It catalyses the reaction 7-aminomethyl-7-carbaguanine + 2 NADP(+) = 7-cyano-7-deazaguanine + 2 NADPH + 3 H(+). It participates in tRNA modification; tRNA-queuosine biosynthesis. Catalyzes the NADPH-dependent reduction of 7-cyano-7-deazaguanine (preQ0) to 7-aminomethyl-7-deazaguanine (preQ1). The polypeptide is NADPH-dependent 7-cyano-7-deazaguanine reductase (Rhizobium rhizogenes (strain K84 / ATCC BAA-868) (Agrobacterium radiobacter)).